Consider the following 395-residue polypeptide: RNA polymerase II elongation factor ELL3 (395 aa).

Disordered regions lie at residues 124–149 (SSLQRHNRTEDARDRESWQNVGDYPE), 163–182 (VPDPLASSQGQSLPGSSREH), 194–218 (LPNRDPDQALPPSASQKHVDKKRPA), and 233–279 (LAPS…SLSP). Residues 130–140 (NRTEDARDRES) show a composition bias toward basic and acidic residues. Over residues 168–177 (ASSQGQSLPG) the composition is skewed to polar residues. Acidic residues predominate over residues 246–258 (LQEEDWEQEDKDE). Positions 268-277 (PSVQADSESL) are enriched in polar residues. The 111-residue stretch at 283 to 393 (PDYLLQYRAI…LILEFEEKNR (111 aa)) folds into the OCEL domain.

The protein belongs to the ELL/occludin family. Interacts with AFF4. Component of the super elongation complex (SEC), at least composed of EAF1, EAF2, CDK9, MLLT3/AF9, AFF (AFF1 or AFF4), the P-TEFb complex and ELL (ELL, ELL2 or ELL3). Component of the little elongation complex (LEC), at least composed of ELL (ELL, ELL2 or ELL3), ZC3H8, ICE1 and ICE2.

It localises to the nucleus. Functionally, enhancer-binding elongation factor that specifically binds enhancers in embryonic stem cells (ES cells), marks them, and is required for their future activation during stem cell specification. Elongation factor component of the super elongation complex (SEC), a complex required to increase the catalytic rate of RNA polymerase II transcription by suppressing transient pausing by the polymerase at multiple sites along the DNA. Component of the little elongation complex (LEC), a complex required to regulate small nuclear RNA (snRNA) gene transcription by RNA polymerase II and III. Does not only bind to enhancer regions of active genes, but also marks the enhancers that are in a poised or inactive state in ES cells and is required for establishing proper RNA polymerase II occupancy at developmentally regulated genes in a cohesin-dependent manner. Probably required for priming developmentally regulated genes for later recruitment of the super elongation complex (SEC), for transcriptional activation during differentiation. Required for recruitment of P-TEFb within SEC during differentiation. Probably preloaded on germ cell chromatin, suggesting that it may prime gene activation by marking enhancers as early as in the germ cells. Promoting epithelial-mesenchymal transition (EMT). This Bos taurus (Bovine) protein is RNA polymerase II elongation factor ELL3 (ELL3).